We begin with the raw amino-acid sequence, 874 residues long: MSAPVVIKALVASNTDIAEAILDAILSRPDEGFRLFCLCHNASPLHHVAGSLVELQLHLPKKRLTSQSRCGLVLTLHLPAEEAFPFLRGLTPLTADRLSTYLDRAGALRSLTPLVELLTLSAKKQPQGDARGRVAWLRPKIVGCLRRIYRVNISARWFISTFGSHEAQFVLVTAAYYFWGIPCTIETLAHLTELFTSESGQSLAAVTSLAELGEVFGSSAWAEQTEAFAHFAHEKLRRDSREIRAVARTIDAYRGRLPLASADLVRYVYLAHAQCFNEGTFKRYSQLTSMGEIGCLPSGGVVLPSLLDRGFAEHMRTYFTRETYLAEHVRVQQLKIRMEPPAPYTWDPDPDDGLMRAWAGLSVDVARELVELARWHADEGPTYPPTLQGFLCLAGQATCRGQWNPKEQFLPPTVLRRVQRLPVFLCHFADRHYFVMTAADPFSSHLAEVVSTPTNCRLPDTCLTRALSYTPVYYSQNSLSEQLFVSRHEYFNPRLPVCNLVLDLDLKIKGAPWSLEEIYDLCRTVRREVLRLMRRLGPVSRAHPVYFFKSACPPADPDNMEDVLPFCICTGKLGFRVITPLPRGHAIVGTSAVQGFVSVLQKLMGLTACLRRMRHKIKEIGAPLFDSGVYHAGRCIRLPHTYKVDRGGGLSRQLRLFVCHPEEEDKHSYVKNALNIQNLLHHSLHVGWPAPKTFCYHIADDGRDYLIQRTRETLPPTVENVCAMIEGHLGLDLVAWVSSCIWPSLMSTLATAVPEDKFPQFLHVTFEQTGPNLVQVCHARGRNFACLRHTHRASSKNVRVFLVLYYTSQAITVTFMSQCFAGRCGANQPTAHFSISVPASRIINRAEASQDSTTSQLARRRDRQDGSFSETLPN.

The CHC2-type zinc-finger motif lies at 786–824; the sequence is CLRHTHRASSKNVRVFLVLYYTSQAITVTFMSQCFAGRC. Over residues 848-857 the composition is skewed to polar residues; it reads ASQDSTTSQL. The segment at 848–874 is disordered; that stretch reads ASQDSTTSQLARRRDRQDGSFSETLPN.

It belongs to the herpesviridae DNA primase family. Associates with the helicase and the primase-associated factor to form the helicase-primase factor.

Its subcellular location is the host nucleus. Its function is as follows. Essential component of the helicase/primase complex. Unwinds the DNA at the replication forks and generates single-stranded DNA for both leading and lagging strand synthesis. The primase initiates primer synthesis and thereby produces large amount of short RNA primers on the lagging strand that the polymerase elongates using dNTPs. This Epstein-Barr virus (strain B95-8) (HHV-4) protein is DNA primase.